We begin with the raw amino-acid sequence, 149 residues long: Large ribosomal subunit protein bL9 (149 aa).

This sequence belongs to the bacterial ribosomal protein bL9 family.

Its function is as follows. Binds to the 23S rRNA. The sequence is that of Large ribosomal subunit protein bL9 from Klebsiella pneumoniae (strain 342).